The primary structure comprises 212 residues: MTDIAIVDYGMGNLRSVAKALEHVAPEAVIAVTNNPEVVRKAERVVVPGQGAMPDCLRELDRLGLREAVRDAAANKPFLGICIGLQMLFDSSEEGNVSGLGIVPGRVKRFPASAMKDEKGQKLKVPHMGWNQVHQSVGHSLWKNIANDSRFYFVHSYYVEPADADSAGHSAYPFSFTCAVAKDNIFAVQFHPEKSHAAGLTLLGNFVRWKPV.

The 210-residue stretch at 3 to 212 (DIAIVDYGMG…LGNFVRWKPV (210 aa)) folds into the Glutamine amidotransferase type-1 domain. C82 acts as the Nucleophile in catalysis. Residues H191 and E193 contribute to the active site.

Heterodimer of HisH and HisF.

The protein localises to the cytoplasm. The enzyme catalyses 5-[(5-phospho-1-deoxy-D-ribulos-1-ylimino)methylamino]-1-(5-phospho-beta-D-ribosyl)imidazole-4-carboxamide + L-glutamine = D-erythro-1-(imidazol-4-yl)glycerol 3-phosphate + 5-amino-1-(5-phospho-beta-D-ribosyl)imidazole-4-carboxamide + L-glutamate + H(+). It carries out the reaction L-glutamine + H2O = L-glutamate + NH4(+). It participates in amino-acid biosynthesis; L-histidine biosynthesis; L-histidine from 5-phospho-alpha-D-ribose 1-diphosphate: step 5/9. IGPS catalyzes the conversion of PRFAR and glutamine to IGP, AICAR and glutamate. The HisH subunit catalyzes the hydrolysis of glutamine to glutamate and ammonia as part of the synthesis of IGP and AICAR. The resulting ammonia molecule is channeled to the active site of HisF. The sequence is that of Imidazole glycerol phosphate synthase subunit HisH from Nitrosospira multiformis (strain ATCC 25196 / NCIMB 11849 / C 71).